Reading from the N-terminus, the 100-residue chain is Urease subunit gamma (100 aa).

It belongs to the urease gamma subunit family. Heterotrimer of UreA (gamma), UreB (beta) and UreC (alpha) subunits. Three heterotrimers associate to form the active enzyme.

The protein resides in the cytoplasm. The enzyme catalyses urea + 2 H2O + H(+) = hydrogencarbonate + 2 NH4(+). The protein operates within nitrogen metabolism; urea degradation; CO(2) and NH(3) from urea (urease route): step 1/1. This chain is Urease subunit gamma, found in Haemophilus influenzae (strain ATCC 51907 / DSM 11121 / KW20 / Rd).